Here is a 136-residue protein sequence, read N- to C-terminus: Small ribosomal subunit protein uS19 (136 aa).

The tract at residues 114–136 is disordered; it reads RSRVSHGSAGVGATRSSKFVPLK.

Belongs to the universal ribosomal protein uS19 family.

In terms of biological role, protein S19 forms a complex with S13 that binds strongly to the 16S ribosomal RNA. The polypeptide is Small ribosomal subunit protein uS19 (Methanosarcina barkeri (strain Fusaro / DSM 804)).